The primary structure comprises 492 residues: Cytochrome P450 monooxygenase ATEG_03631 (492 aa).

Residues 10–30 form a helical membrane-spanning segment; the sequence is FATLNPMVVVAIPVFLFVISL. Asn-309 carries N-linked (GlcNAc...) asparagine glycosylation. Position 457 (Cys-457) interacts with heme.

This sequence belongs to the cytochrome P450 family. The cofactor is heme.

The protein localises to the membrane. It participates in secondary metabolite biosynthesis. Cytochrome P450 monooxygenase; part of the cluster A that mediates the biosynthesis of azasperpyranones, members of the azaphilone family that exhibit anti-cancer activities. Azasperpyranones are synthesized by 2 clusters, A and B. Cluster A is responsible for the production of the polyhydric phenol moiety while the azaphilonoid scaffold is produced by the cluster B. The non-reducing polyketide synthase ATEG_03629 produces 5-methyl orsellinic acid, which is then reduced to 5-methyl orsellinic aldehyde by the NRPS-like protein ATEG_03630. 5-methyl orsellinic aldehyde is then first hydroxylated by the FAD-dependent monooxygenase ATEG_03635 and subsequently hydroxylated by the cytochrome P450 monooxygenase ATEG_03631 to produce the unstable polyhydric phenol precursor of azasperpyranones. On the other hand, the polyketide synthase ATEG_07659 is responsible for producing the 3,5-dimethyloctadienone moiety from acetyl-CoA, three malonyl-CoA, and two S-adenosyl methionines (SAM). The 3,5-dimethyloctadienone moiety is then loaded onto the SAT domain of ATEG_07661 and extended with four malonyl-CoA and one SAM, which leads to the formation of 2,4-dihydroxy-6-(5,7-dimethyl-2-oxo-trans-3-trans-5-nonadienyl)-3-methylbenzaldehyde (compound 8) after reductive release and aldol condensation. The FAD-dependent monooxygenase ATEG_07662 is the next enzyme in the biosynthesis sequence and hydroxylates the side chain at the benzylic position of compound 8. In Aspergillus nidulans, afoF, the ortholog of the FAD-dependent oxygenase ATEG_07660, is the key enzyme for the biosynthesis of asperfuranone by catalyzing the hydroxylation at C-8 of to prevent the formation of a six-membered ring hemiacetal intermediate and thus facilitating the formation of a five-membered ring to produce asperfuranone. In Aspergillus terreus, ATEG_07660 is probably not functional, which leads to the formation of the six-membered ring hemiacetal intermediate presperpyranone instead of asperfuranone. Finally, ATEG_03636 is involved in the condensation of the polyhydric phenol moiety produced by cluster A and the perasperpyranone precursor produced by cluster B, to yield azasperpyranone A. Further modifications of azasperpyranone A result in the production of derivatives, including azasperpyranone B to F. This is Cytochrome P450 monooxygenase ATEG_03631 from Aspergillus terreus (strain NIH 2624 / FGSC A1156).